The following is a 332-amino-acid chain: L-lactate dehydrogenase A chain (332 aa).

NAD(+) is bound by residues 29–57 (GAVG…VEDK) and Arg-99. Residues Arg-106, Asn-138, and Arg-169 each coordinate substrate. Asn-138 is a binding site for NAD(+). Residue His-193 is the Proton acceptor of the active site. Position 248 (Thr-248) interacts with substrate.

This sequence belongs to the LDH/MDH superfamily. LDH family. Homotetramer.

It is found in the cytoplasm. The enzyme catalyses (S)-lactate + NAD(+) = pyruvate + NADH + H(+). The protein operates within fermentation; pyruvate fermentation to lactate; (S)-lactate from pyruvate: step 1/1. Interconverts simultaneously and stereospecifically pyruvate and lactate with concomitant interconversion of NADH and NAD(+). In Alligator mississippiensis (American alligator), this protein is L-lactate dehydrogenase A chain (LDHA).